The chain runs to 535 residues: Zinc transporter ZIP5 (535 aa).

The first 19 residues, 1 to 19 (MGPPVHHLLTGLCVGVALG), serve as a signal peptide directing secretion. The Extracellular segment spans residues 20–210 (WVGGSVPNLG…PAPPGDVLSA (191 aa)). Asparagine 49 and asparagine 158 each carry an N-linked (GlcNAc...) asparagine glycan. The chain crosses the membrane as a helical span at residues 211 to 231 (LLHSGLAVLFLSLPAPLSLLL). Over 232–242 (LRLLGPRLLRP) the chain is Cytoplasmic. A helical transmembrane segment spans residues 243 to 263 (VLGFLGALAVGTLCGDALLHL). Residues 264–285 (LPHAQGGRHTGPSEQSEEDLGP) are Extracellular-facing. Residues 286 to 306 (GLSVLGGLFLLFMLENTLGLV) traverse the membrane as a helical segment. The Cytoplasmic segment spans residues 307–439 (RHRGLRPRCC…LLQEGLSFRK (133 aa)). The disordered stretch occupies residues 316–373 (CRNKRDLGEPNPDPEDGSGMVLRPLQAASEPEVQGQRENRQSSPSLAPPGHQGHSHEH). Serine 333 is modified (phosphoserine). Pros-methylhistidine is present on histidine 371. The helical transmembrane segment at 440 to 460 (LLLLSLVSGALGLGGAALGVG) threads the bilayer. Residues 461–465 (LSLGP) lie on the Extracellular side of the membrane. The helical transmembrane segment at 466 to 486 (VPLTPWVFGTTAGVFLYVALV) threads the bilayer. The Cytoplasmic portion of the chain corresponds to 487 to 503 (DMLPTLLRPPEPLPVFH). The helical transmembrane segment at 504-524 (VLLQGLGLLLGGSLMFTIALL) threads the bilayer. Over 525–535 (EEQLVPTVPDG) the chain is Extracellular.

The protein belongs to the ZIP transporter (TC 2.A.5) family. In terms of assembly, homodimer. N-Glycosylated. In terms of processing, methylated at His-371 by METTL9. Expressed in all stages of eye development and primarily in the sclera and several layers of the retina, including the inner segment, outer plexiform layer and ganglion cell layer. Expressed in pancreas, kidney and the proximal and distal small intestine as well as in the embryonic visceral yolk sac. In the proximal intestine, expression is predominant in the crypts but diminishes toward the apical regions of the villi.

The protein resides in the basolateral cell membrane. It carries out the reaction Zn(2+)(in) = Zn(2+)(out). Its function is as follows. Uniporter that transports zinc(2+) into polarized cells of enterocytes, pancreatic acinar and endoderm cells across the basolateral membrane and participates, notably, in zinc excretion from the intestine by the uptake of zinc from the blood into the intestine. The transport mechanism is temperature- and concentration-dependent and saturable. In addition, is also a high affinity copper transporter in vitro. Also may regulate glucose-stimulated insulin secretion (GSIS) in islets primarily through the zinc-activated SIRT1-PPARGC1A axis. Could regulate the BMP/TGF-beta (bone morphogenetic protein/transforming growth factor-beta) signaling pathway and modulates extracellular matrix (ECM) proteins of the sclera. Plays a role in eye development. The polypeptide is Zinc transporter ZIP5 (Mus musculus (Mouse)).